A 146-amino-acid chain; its full sequence is Hemoglobin subunit beta-2 (146 aa).

In terms of domain architecture, Globin spans 2-146 (EWTDFERATI…VVSSLGRQYH (145 aa)). His63 and His92 together coordinate heme b.

The protein belongs to the globin family. Hb 2 is a heterotetramer of two alpha-2 and two beta-2 chains. Red blood cells.

Its function is as follows. Involved in oxygen transport from gills to the various peripheral tissues. This is Hemoglobin subunit beta-2 (hbb2) from Gobionotothen gibberifrons (Humped rockcod).